The primary structure comprises 248 residues: Pyridoxine 5'-phosphate synthase (248 aa).

Residue Asn-10 coordinates 3-amino-2-oxopropyl phosphate. Residue 12–13 (DH) coordinates 1-deoxy-D-xylulose 5-phosphate. Arg-21 serves as a coordination point for 3-amino-2-oxopropyl phosphate. The Proton acceptor role is filled by His-46. Residues Arg-48 and His-53 each coordinate 1-deoxy-D-xylulose 5-phosphate. Glu-73 functions as the Proton acceptor in the catalytic mechanism. Residue Thr-103 participates in 1-deoxy-D-xylulose 5-phosphate binding. Catalysis depends on His-194, which acts as the Proton donor. Residues Gly-195 and 216-217 (GH) contribute to the 3-amino-2-oxopropyl phosphate site.

Belongs to the PNP synthase family. Homooctamer; tetramer of dimers.

The protein localises to the cytoplasm. It carries out the reaction 3-amino-2-oxopropyl phosphate + 1-deoxy-D-xylulose 5-phosphate = pyridoxine 5'-phosphate + phosphate + 2 H2O + H(+). It functions in the pathway cofactor biosynthesis; pyridoxine 5'-phosphate biosynthesis; pyridoxine 5'-phosphate from D-erythrose 4-phosphate: step 5/5. Catalyzes the complicated ring closure reaction between the two acyclic compounds 1-deoxy-D-xylulose-5-phosphate (DXP) and 3-amino-2-oxopropyl phosphate (1-amino-acetone-3-phosphate or AAP) to form pyridoxine 5'-phosphate (PNP) and inorganic phosphate. The polypeptide is Pyridoxine 5'-phosphate synthase (Legionella pneumophila (strain Lens)).